Consider the following 316-residue polypeptide: Methionyl-tRNA formyltransferase (316 aa).

Residue 110 to 113 coordinates (6S)-5,6,7,8-tetrahydrofolate; sequence SLLP.

The protein belongs to the Fmt family.

It catalyses the reaction L-methionyl-tRNA(fMet) + (6R)-10-formyltetrahydrofolate = N-formyl-L-methionyl-tRNA(fMet) + (6S)-5,6,7,8-tetrahydrofolate + H(+). Attaches a formyl group to the free amino group of methionyl-tRNA(fMet). The formyl group appears to play a dual role in the initiator identity of N-formylmethionyl-tRNA by promoting its recognition by IF2 and preventing the misappropriation of this tRNA by the elongation apparatus. The protein is Methionyl-tRNA formyltransferase of Halothermothrix orenii (strain H 168 / OCM 544 / DSM 9562).